The chain runs to 396 residues: MSKWGHLAQTLTARKQQDLYRSRLTIDSPQAPRVMIEGREYLAFCSNDYLGLANDPRLIAAAQQALSEFGLGGGASHLVIGHHRAHHELELDLAEFTGRDRALLFSTGYMANLGVASALLGRGDYVIEDKLNHASLLDAGMLSGARLLRYRHADAEHLALRLDEVGDSRALVITDGVFSMDGDIAPLDAIAQVCHSKDAMLMVDDAHGFGVLGTEGGGCAAHFQMNQVQVPVLMGTLGKSYGAAGAFVAGSGELIETLVQFARTYIYTTSMPPAIAAAARVSLRISREETWRRERLNELVTRFRKEAIGMGYQLAASSTPIQPVFIGDAAAAMELSQALRKEGILITAIRPPTVPANTSRLRVTFSAAHTDDDLNQLLEVLHKYRGATNIAGVANA.

Position 21 (arginine 21) interacts with substrate. 108-109 (GY) contacts pyridoxal 5'-phosphate. Residue histidine 133 participates in substrate binding. Pyridoxal 5'-phosphate is bound by residues serine 179, histidine 207, and threonine 236. Residue lysine 239 is modified to N6-(pyridoxal phosphate)lysine. Threonine 353 contributes to the substrate binding site.

The protein belongs to the class-II pyridoxal-phosphate-dependent aminotransferase family. BioF subfamily. As to quaternary structure, homodimer. Pyridoxal 5'-phosphate serves as cofactor.

The catalysed reaction is 6-carboxyhexanoyl-[ACP] + L-alanine + H(+) = (8S)-8-amino-7-oxononanoate + holo-[ACP] + CO2. Its pathway is cofactor biosynthesis; biotin biosynthesis. Catalyzes the decarboxylative condensation of pimeloyl-[acyl-carrier protein] and L-alanine to produce 8-amino-7-oxononanoate (AON), [acyl-carrier protein], and carbon dioxide. The chain is 8-amino-7-oxononanoate synthase from Hahella chejuensis (strain KCTC 2396).